Consider the following 218-residue polypeptide: MKNMLLLSSSKYKNTGYLEHTIPWLQNFLADYRGKTIAFVPYAGVSRTFDEYEKTVQNALSDLGMNIVSVHRGKQHRDIIEQADVIAIGGGNTFCLLKQLYEHNLIDIIREKVNNGTPYFGWSAGANVAGSSIMTTNDMPITYPPSFQALQLFPHQINPHFISGKMQGHNGESREERLAEFLLVNPTALVYALPEGSALHIQNGMGNRIGRKSYFVLQ.

Active-site charge relay system residues include S123, D138, and H160.

The protein belongs to the peptidase S51 family.

It is found in the cytoplasm. The enzyme catalyses Dipeptidase E catalyzes the hydrolysis of dipeptides Asp-|-Xaa. It does not act on peptides with N-terminal Glu, Asn or Gln, nor does it cleave isoaspartyl peptides.. Hydrolyzes dipeptides containing N-terminal aspartate residues. May play a role in allowing the cell to use peptide aspartate to spare carbon otherwise required for the synthesis of the aspartate family of amino acids. The chain is Peptidase E from Haemophilus influenzae (strain ATCC 51907 / DSM 11121 / KW20 / Rd).